The sequence spans 251 residues: 3-deoxy-manno-octulosonate cytidylyltransferase (251 aa).

This sequence belongs to the KdsB family.

It is found in the cytoplasm. It carries out the reaction 3-deoxy-alpha-D-manno-oct-2-ulosonate + CTP = CMP-3-deoxy-beta-D-manno-octulosonate + diphosphate. It functions in the pathway nucleotide-sugar biosynthesis; CMP-3-deoxy-D-manno-octulosonate biosynthesis; CMP-3-deoxy-D-manno-octulosonate from 3-deoxy-D-manno-octulosonate and CTP: step 1/1. It participates in bacterial outer membrane biogenesis; lipopolysaccharide biosynthesis. Its function is as follows. Activates KDO (a required 8-carbon sugar) for incorporation into bacterial lipopolysaccharide in Gram-negative bacteria. This Chelativorans sp. (strain BNC1) protein is 3-deoxy-manno-octulosonate cytidylyltransferase.